Consider the following 100-residue polypeptide: Urease subunit gamma (100 aa).

Belongs to the urease gamma subunit family. In terms of assembly, heterotrimer of UreA (gamma), UreB (beta) and UreC (alpha) subunits. Three heterotrimers associate to form the active enzyme.

It is found in the cytoplasm. It catalyses the reaction urea + 2 H2O + H(+) = hydrogencarbonate + 2 NH4(+). It functions in the pathway nitrogen metabolism; urea degradation; CO(2) and NH(3) from urea (urease route): step 1/1. The chain is Urease subunit gamma from Mycolicibacterium smegmatis (strain ATCC 700084 / mc(2)155) (Mycobacterium smegmatis).